Reading from the N-terminus, the 381-residue chain is Heterogeneous nuclear rnp K-like protein 2 (381 aa).

The segment at 1-34 is disordered; sequence MSQFFEAATPVAIPTNNTNGGSSDAGSAATGGAP. Positions 15-33 are enriched in low complexity; sequence TNNTNGGSSDAGSAATGGA. KH domains are found at residues 43-107, 156-221, and 258-326; these read TINH…IGDI, IGYV…LIEI, and NTRI…ESML. The interval 344–381 is disordered; the sequence is LEAAEGDATVVTERSDSASFLEEKEEPQKNHDNKEEQS. A phosphoserine mark is found at S358, S360, and S362. The span at 369 to 381 shows a compositional bias: basic and acidic residues; that stretch reads EPQKNHDNKEEQS.

Belongs to the HEK2 family. As to quaternary structure, binds RNA. Phosphorylated by the plasma membrane-Anchored casein kinase YCK1. Phosphorylation at its C-terminus reduces its RNA-binding capacity.

It is found in the cytoplasm. It localises to the P-body. The protein localises to the nucleus. Its subcellular location is the chromosome. The protein resides in the telomere. RNA-binding protein involved in the correct localization of transcripts in the cell. RNA localization is a widespread mechanism for achieving localized protein synthesis. Required for the asymmetric localization to the daughter cell nucleus of the ASH1 transcript, coding for a specific repressor of transcription. Overexpression inhibits translation of the ASH1 transcript. Involved in the stability of transcripts, like the MTL1 mRNA. Involved in structural and functional organization of telomeric chromatin and regulates silencing at the HMR locus. In Saccharomyces cerevisiae (strain JAY291) (Baker's yeast), this protein is Heterogeneous nuclear rnp K-like protein 2 (HEK2).